The sequence spans 213 residues: Uridine kinase (213 aa).

Residue 15 to 22 (GASASGKS) coordinates ATP.

This sequence belongs to the uridine kinase family.

The protein localises to the cytoplasm. The enzyme catalyses uridine + ATP = UMP + ADP + H(+). It catalyses the reaction cytidine + ATP = CMP + ADP + H(+). It functions in the pathway pyrimidine metabolism; CTP biosynthesis via salvage pathway; CTP from cytidine: step 1/3. The protein operates within pyrimidine metabolism; UMP biosynthesis via salvage pathway; UMP from uridine: step 1/1. This Erwinia tasmaniensis (strain DSM 17950 / CFBP 7177 / CIP 109463 / NCPPB 4357 / Et1/99) protein is Uridine kinase.